A 480-amino-acid chain; its full sequence is Probable cytosol aminopeptidase (480 aa).

2 residues coordinate Mn(2+): K248 and D253. Residue K260 is part of the active site. Mn(2+) contacts are provided by D271, D330, and E332. R334 is an active-site residue.

The protein belongs to the peptidase M17 family. Requires Mn(2+) as cofactor.

It is found in the cytoplasm. It carries out the reaction Release of an N-terminal amino acid, Xaa-|-Yaa-, in which Xaa is preferably Leu, but may be other amino acids including Pro although not Arg or Lys, and Yaa may be Pro. Amino acid amides and methyl esters are also readily hydrolyzed, but rates on arylamides are exceedingly low.. The enzyme catalyses Release of an N-terminal amino acid, preferentially leucine, but not glutamic or aspartic acids.. Its function is as follows. Presumably involved in the processing and regular turnover of intracellular proteins. Catalyzes the removal of unsubstituted N-terminal amino acids from various peptides. The chain is Probable cytosol aminopeptidase from Solibacter usitatus (strain Ellin6076).